Reading from the N-terminus, the 3470-residue chain is Mucin-4 (3470 aa).

Positions M1–A28 are cleaved as a signal peptide. Positions T32–G163 are disordered. The segment covering S37–S57 has biased composition (low complexity). O-linked (GalNAc...) threonine glycosylation is found at T42, T44, T65, T68, T87, T91, T96, T97, T98, T99, T100, T103, T104, T106, T117, T130, T131, T132, T145, T146, T150, T151, T152, and T155. Residues R43–S2501 are variable number of tandem repeats (VNTR). Polar residues predominate over residues E66–H85. Residues T86–S111 are compositionally biased toward low complexity. The span at R112 to G129 shows a compositional bias: polar residues. Positions T130–S162 are enriched in low complexity. N-linked (GlcNAc...) asparagine glycosylation is present at N188. Residues T199–V220 show a composition bias toward polar residues. Disordered stretches follow at residues T199 to S679, F691 to T925, T938 to V1219, L1232 to V1400, L1413 to V1524, L1537 to T1647, and T1660 to T1992. The segment covering T221–T232 has biased composition (low complexity). The span at P233 to S243 shows a compositional bias: polar residues. Residues T236 and T241 are each glycosylated (O-linked (GalNAc...) threonine). Positions S251 to T272 are enriched in low complexity. Residues D273 to I283 show a composition bias toward polar residues. 2 N-linked (GlcNAc...) asparagine glycosylation sites follow: N278 and N286. Residues T284–T299 are compositionally biased toward low complexity. T297 is a glycosylation site (O-linked (GalNAc...) threonine). Positions P300–Q335 are enriched in polar residues. The N-linked (GlcNAc...) asparagine glycan is linked to N311. The segment covering T336–T346 has biased composition (low complexity). The segment covering P347–Q448 has biased composition (polar residues). 6 O-linked (GalNAc...) threonine glycosylation sites follow: T357, T370, T371, T372, T385, and T423. The span at S449–S470 shows a compositional bias: low complexity. N465 carries N-linked (GlcNAc...) asparagine glycosylation. Over residues T479 to P489 the composition is skewed to polar residues. Residue T494 is glycosylated (O-linked (GalNAc...) threonine). Residues H496–M510 show a composition bias toward low complexity. A compositionally biased stretch (polar residues) spans L511–G577. The O-linked (GalNAc...) threonine glycan is linked to T513. N517 carries an N-linked (GlcNAc...) asparagine glycan. O-linked (GalNAc...) threonine glycosylation is found at T542 and T545. N-linked (GlcNAc...) asparagine glycosylation occurs at N550. T551, T584, T585, T586, T587, T588, T592, T594, T599, T605, T618, T619, T620, T633, T634, T639, T640, and T655 each carry an O-linked (GalNAc...) threonine glycan. A compositionally biased stretch (low complexity) spans T578–T599. Polar residues predominate over residues H600 to P631. Positions S632–S647 are enriched in low complexity. Composition is skewed to polar residues over residues T653–S679 and F691–G701. N674 carries an N-linked (GlcNAc...) asparagine glycan. O-linked (GalNAc...) threonine glycans are attached at residues T702, T708, T709, T710, T711, and T716. The segment covering T702–S723 has biased composition (low complexity). N-linked (GlcNAc...) asparagine glycosylation is present at N718. The segment covering R724–E741 has biased composition (polar residues). Low complexity predominate over residues T742–V772. T743, T744, T757, and T758 each carry an O-linked (GalNAc...) threonine glycan. The segment covering V780–K824 has biased composition (polar residues). The N-linked (GlcNAc...) asparagine glycan is linked to N798. A compositionally biased stretch (low complexity) spans G825 to G848. 9 O-linked (GalNAc...) threonine glycosylation sites follow: T826, T832, T833, T834, T839, T840, T842, T846, and T853. Residues D849–P879 are compositionally biased toward polar residues. N875 is a glycosylation site (N-linked (GlcNAc...) asparagine). Residues S880–S895 show a composition bias toward low complexity. O-linked (GalNAc...) threonine glycosylation is found at T901 and T902. Residues T901–T925 are compositionally biased toward polar residues. The N-linked (GlcNAc...) asparagine glycan is linked to N922. Over residues K948–S968 the composition is skewed to low complexity. O-linked (GalNAc...) threonine glycosylation is found at T950, T952, T956, T957, T958, T959, T963, and T964. A glycan (N-linked (GlcNAc...) asparagine) is linked at N966. The span at A969 to P1003 shows a compositional bias: polar residues. O-linked (GalNAc...) threonine glycosylation is found at T990, T991, T992, T1005, T1006, T1011, T1012, and T1015. Low complexity predominate over residues S1004–S1019. A compositionally biased stretch (polar residues) spans V1020–Q1065. N1024 carries an N-linked (GlcNAc...) asparagine glycan. 5 O-linked (GalNAc...) threonine glycosylation sites follow: T1025, T1026, T1027, T1029, and T1038. N-linked (GlcNAc...) asparagine glycosylation is found at N1046, N1072, and N1091. The segment covering S1066 to T1083 has biased composition (low complexity). Residues N1091–S1120 show a composition bias toward polar residues. Over residues S1121 to T1140 the composition is skewed to low complexity. T1125, T1126, T1127, T1128, T1132, T1133, T1135, T1140, T1174, T1198, and T1207 each carry an O-linked (GalNAc...) threonine glycan. Polar residues-rich tracts occupy residues H1141–V1219 and L1232–G1242. N1215 is a glycosylation site (N-linked (GlcNAc...) asparagine). T1243, T1245, T1249, T1250, T1251, T1252, T1256, T1257, T1259, T1263, T1270, T1283, T1284, T1285, T1298, T1299, T1304, T1305, T1318, and T1319 each carry an O-linked (GalNAc...) threonine glycan. Low complexity predominate over residues T1243–S1264. The segment covering R1265–P1296 has biased composition (polar residues). The span at S1297 to S1312 shows a compositional bias: low complexity. Polar residues predominate over residues T1318–P1353. A glycan (N-linked (GlcNAc...) asparagine) is linked at N1339. 11 O-linked (GalNAc...) threonine glycosylation sites follow: T1341, T1342, T1355, T1356, T1365, T1368, T1372, T1375, T1376, T1377, and T1379. The span at S1354–V1390 shows a compositional bias: low complexity. 2 stretches are compositionally biased toward polar residues: residues L1391 to V1400 and L1413 to P1477. The N-linked (GlcNAc...) asparagine glycan is linked to N1396. 9 O-linked (GalNAc...) threonine glycosylation sites follow: T1426, T1430, T1431, T1440, T1451, T1453, T1464, T1465, and T1466. N1471 carries an N-linked (GlcNAc...) asparagine glycan. Over residues S1478–T1489 the composition is skewed to low complexity. O-linked (GalNAc...) threonine glycosylation is found at T1479, T1480, T1499, and T1512. Polar residues-rich tracts occupy residues Q1490–V1524 and L1537–Q1553. N-linked (GlcNAc...) asparagine glycosylation occurs at N1520. 4 O-linked (GalNAc...) threonine glycosylation sites follow: T1554, T1555, T1557, and T1562. Low complexity predominate over residues T1554–S1569. The span at R1570–E1587 shows a compositional bias: polar residues. O-linked (GalNAc...) threonine glycans are attached at residues T1588, T1589, T1590, T1604, T1609, T1627, T1635, and T1636. Residues T1588 to T1609 are compositionally biased toward low complexity. Residues A1610 to T1647 show a composition bias toward polar residues. N1644 carries N-linked (GlcNAc...) asparagine glycosylation. Positions K1670–S1693 are enriched in low complexity. Residues T1672, T1674, T1678, T1679, T1680, T1681, T1685, T1686, T1688, T1699, and T1714 are each glycosylated (O-linked (GalNAc...) threonine). The segment covering R1694–P1725 has biased composition (polar residues). N-linked (GlcNAc...) asparagine glycosylation is present at N1721. Residues S1726–G1742 show a composition bias toward low complexity. A compositionally biased stretch (polar residues) spans T1747 to E1837. A glycan (N-linked (GlcNAc...) asparagine) is linked at N1770. 9 O-linked (GalNAc...) threonine glycosylation sites follow: T1838, T1839, T1840, T1854, T1873, T1874, T1888, T1889, and T1891. Over residues T1838 to T1859 the composition is skewed to low complexity. Positions A1860–V1877 are enriched in polar residues. Over residues T1878–Q1895 the composition is skewed to low complexity. N1896 carries an N-linked (GlcNAc...) asparagine glycan. The span at N1896–N1927 shows a compositional bias: polar residues. Over residues P1928–S1945 the composition is skewed to low complexity. O-linked (GalNAc...) threonine glycosylation is found at T1930, T1931, T1932, T1933, T1937, T1938, T1940, T1964, T1965, T1966, and T1980. Residues Y1946–T1992 are compositionally biased toward polar residues. Residue N2022 is glycosylated (N-linked (GlcNAc...) asparagine). Over residues S2037–Q2055 the composition is skewed to polar residues. 4 disordered regions span residues S2037–H2107, Q2139–P2185, T2205–S2237, and T2262–L2368. 2 O-linked (GalNAc...) threonine glycosylation sites follow: T2056 and T2057. A compositionally biased stretch (low complexity) spans T2056–S2071. The segment covering R2072 to G2089 has biased composition (polar residues). O-linked (GalNAc...) threonine glycosylation is found at T2090, T2091, and T2092. Low complexity predominate over residues T2090–H2107. N2104 carries N-linked (GlcNAc...) asparagine glycosylation. 2 O-linked (GalNAc...) threonine glycosylation sites follow: T2105 and T2106. Residues N2148, N2182, and N2225 are each glycosylated (N-linked (GlcNAc...) asparagine). Polar residues-rich tracts occupy residues T2205–A2229 and T2262–I2303. T2264, T2352, T2354, T2359, and T2360 each carry an O-linked (GalNAc...) threonine glycan. Residues T2344–P2367 show a composition bias toward low complexity. The region spanning P2458–E2613 is the NIDO domain. Positions E2614–R2726 constitute an AMOP domain. One can recognise a VWFD domain in the interval R2738–L2937. N-linked (GlcNAc...) asparagine glycosylation is found at N2755, N2773, N2801, N2827, N2844, N2853, N2888, N2909, N2916, N2932, N2958, N2985, N3003, N3014, N3054, N3079, N3102, N3109, N3157, and N3174. Residues P3173 to F3212 enclose the EGF-like 1 domain. Cystine bridges form between C3177–C3188, C3182–C3200, and C3202–C3211. N3240, N3247, and N3353 each carry an N-linked (GlcNAc...) asparagine glycan. The EGF-like 2 domain maps to V3382–E3421. Disulfide bonds link C3385/C3396, C3390/C3405, and C3407/C3420. The helical transmembrane segment at G3432–F3452 threads the bilayer.

In terms of assembly, a heterodimeric complex, composed of a mucin-4 alpha chain and a cysteine-rich transmembrane mucin-4 beta chain. Mucin-4 beta chain interacts with ERBB2 via the EGF-like domain 1. In nonpolarized cells, associates with ERBB2 and ERBB3. Proteolytically cleaved into 2 chains, mucin-4 alpha chain and mucin-4 beta chain. In terms of processing, highly O-glycosylated. Post-translationally, predominantly N-glycosylated. In terms of tissue distribution, expressed in trachea, duodenum and intestine. Lower expression in stomach, salivary glands, liver, gallbladder, and kidney.

The protein localises to the cell membrane. It is found in the secreted. Membrane-bound mucin, a family of highly glycosylated proteins that constitute the major component of the mucus, the slimy and viscous secretion covering epithelial surfaces. These glycoproteins play important roles in the protection of the epithelium and are implicated in epithelial renewal and differentiation. Regulates cellular behavior through both anti-adhesive effects on cell-cell and cell-extracellular matrix interactions and its ability to act as an intramembrane ligand for ERBB2. Plays an important role in proliferation and differentiation of epithelial cells by inducing specific phosphorylation of ERBB2. In polarized epithelial cells, segregates ERBB2 and other ERBB receptors and prevents ERBB2 from acting as a coreceptor. The interaction with ERBB2 leads to enhanced expression of CDKN1B. The formation of a MUC4-ERBB2-ERBB3-NRG1 complex leads to down-regulation of CDKN1B, resulting in repression of apoptosis and stimulation of proliferation. Its ability to promote tumor growth may be mainly due to repression of apoptosis as opposed to proliferation. This is Mucin-4 (Muc4) from Mus musculus (Mouse).